The sequence spans 162 residues: 2-amino-4-hydroxy-6-hydroxymethyldihydropteridine pyrophosphokinase (162 aa).

It belongs to the HPPK family.

It carries out the reaction 6-hydroxymethyl-7,8-dihydropterin + ATP = (7,8-dihydropterin-6-yl)methyl diphosphate + AMP + H(+). Its pathway is cofactor biosynthesis; tetrahydrofolate biosynthesis; 2-amino-4-hydroxy-6-hydroxymethyl-7,8-dihydropteridine diphosphate from 7,8-dihydroneopterin triphosphate: step 4/4. Functionally, catalyzes the transfer of pyrophosphate from adenosine triphosphate (ATP) to 6-hydroxymethyl-7,8-dihydropterin, an enzymatic step in folate biosynthesis pathway. This chain is 2-amino-4-hydroxy-6-hydroxymethyldihydropteridine pyrophosphokinase (folK), found in Pseudomonas aeruginosa (strain ATCC 15692 / DSM 22644 / CIP 104116 / JCM 14847 / LMG 12228 / 1C / PRS 101 / PAO1).